The primary structure comprises 97 residues: uncharacterized protein (97 aa).

The residue at position 2 (Ser-2) is an N-acetylserine.

This is an uncharacterized protein from Mycobacterium tuberculosis (strain ATCC 25618 / H37Rv).